Consider the following 106-residue polypeptide: Glutaredoxin-1 (106 aa).

Ala1 bears the N-acetylalanine mark. Residues 2–105 (QEFVNSKIQP…ARLKEMGALR (104 aa)) form the Glutaredoxin domain. At Lys8 the chain carries N6-succinyllysine. Cystine bridges form between Cys22–Cys25 and Cys78–Cys82.

This sequence belongs to the glutaredoxin family.

The protein resides in the cytoplasm. In terms of biological role, has a glutathione-disulfide oxidoreductase activity in the presence of NADPH and glutathione reductase. Reduces low molecular weight disulfides and proteins. This Oryctolagus cuniculus (Rabbit) protein is Glutaredoxin-1 (GLRX).